A 217-amino-acid chain; its full sequence is MDDAFTVDDLIACYARGVFPMADAREDESLFLIDPERRGVLPLGTFHIPKRLARTVRNGPYEVRVDTAFDTVIENCAASRPGRLDTWINHPIQRLYGQLYARGLAHSVETWLGDELVGGLYGVSLGGAFFGESMFSTARDASKVALVHLVARLIAGGYELLDTQFLTEHLAQFGVMEISRADYRRRLSKALATPGDFYGLAAGATGIDCLQAISQAS.

It belongs to the L/F-transferase family.

The protein localises to the cytoplasm. The catalysed reaction is N-terminal L-lysyl-[protein] + L-leucyl-tRNA(Leu) = N-terminal L-leucyl-L-lysyl-[protein] + tRNA(Leu) + H(+). It catalyses the reaction N-terminal L-arginyl-[protein] + L-leucyl-tRNA(Leu) = N-terminal L-leucyl-L-arginyl-[protein] + tRNA(Leu) + H(+). It carries out the reaction L-phenylalanyl-tRNA(Phe) + an N-terminal L-alpha-aminoacyl-[protein] = an N-terminal L-phenylalanyl-L-alpha-aminoacyl-[protein] + tRNA(Phe). In terms of biological role, functions in the N-end rule pathway of protein degradation where it conjugates Leu, Phe and, less efficiently, Met from aminoacyl-tRNAs to the N-termini of proteins containing an N-terminal arginine or lysine. The chain is Leucyl/phenylalanyl-tRNA--protein transferase from Caulobacter vibrioides (strain ATCC 19089 / CIP 103742 / CB 15) (Caulobacter crescentus).